Consider the following 108-residue polypeptide: Large ribosomal subunit protein uL24 (108 aa).

It belongs to the universal ribosomal protein uL24 family. Part of the 50S ribosomal subunit.

Functionally, one of two assembly initiator proteins, it binds directly to the 5'-end of the 23S rRNA, where it nucleates assembly of the 50S subunit. In terms of biological role, one of the proteins that surrounds the polypeptide exit tunnel on the outside of the subunit. The polypeptide is Large ribosomal subunit protein uL24 (Geobacter metallireducens (strain ATCC 53774 / DSM 7210 / GS-15)).